The sequence spans 424 residues: Elongation factor Tu, mitochondrial (424 aa).

The region spanning 36-234 (KPHVNVGTIG…VLDTKIPLPH (199 aa)) is the tr-type G domain. The segment at 45 to 52 (GHVDHGKT) is G1. Residue 45–52 (GHVDHGKT) participates in GTP binding. The G2 stretch occupies residues 86–90 (GITIT). The G3 stretch occupies residues 107–110 (DCPG). GTP contacts are provided by residues 107–111 (DCPGH) and 162–165 (NKMD). Residues 162 to 165 (NKMD) form a G4 region. The G5 stretch occupies residues 199-201 (AAA).

The protein belongs to the TRAFAC class translation factor GTPase superfamily. Classic translation factor GTPase family. EF-Tu/EF-1A subfamily.

It is found in the mitochondrion. Functionally, this protein promotes the GTP-dependent binding of aminoacyl-tRNA to the A-site of ribosomes during protein biosynthesis. This Dictyostelium discoideum (Social amoeba) protein is Elongation factor Tu, mitochondrial (tufm).